Reading from the N-terminus, the 341-residue chain is MATIKDVAKRANVSTTTVSHVINKTRFVAEETRNAVWAAIKELHYSPSAVARSLKVNHTKSIGLLATSSEAAYFAEIIESVEKSCFQKGYTLILGNAWNDLEKQRAYLSMMAQKRVDGLLVMCSEYPDSVLSMLEEYRHIPMVVMDWGEAKADFTDAVIDNAFQGGYIAGRYLIERGHREIGVIPGPLERNTGAGRLAGFMQAMKEAHISVPENWIVQGDFEPESGYRAMQQILNQQHRPTAVFCGGDIMAMGAICAADEMGLRVPQDISLIGYDNVRNARYFSPALTTIHQPKDSLGEAAFNMLLDRIVNKREESQSIEVHPRLVERRSVADGPFVDYRR.

Positions 2 to 56 constitute an HTH lacI-type domain; the sequence is ATIKDVAKRANVSTTTVSHVINKTRFVAEETRNAVWAAIKELHYSPSAVARSLKV. Residues 4 to 23 constitute a DNA-binding region (H-T-H motif); the sequence is IKDVAKRANVSTTTVSHVIN. The DNA-binding element occupies 48-56; it reads SAVARSLKV. 5 residues coordinate hypoxanthine: Y73, R190, T192, F221, and D275.

In terms of assembly, homodimer.

The protein operates within purine metabolism; purine nucleotide biosynthesis [regulation]. In terms of biological role, is the main repressor of the genes involved in the de novo synthesis of purine nucleotides, regulating purB, purC, purEK, purF, purHD, purL, purMN and guaBA expression. PurR is allosterically activated to bind its cognate DNA by binding the purine corepressors, hypoxanthine or guanine, thereby effecting transcription repression. This is HTH-type transcriptional repressor PurR from Klebsiella pneumoniae subsp. pneumoniae (strain ATCC 700721 / MGH 78578).